A 159-amino-acid chain; its full sequence is Dehydratase GME11372 (159 aa).

Active-site residues include His-79 and His-104.

This sequence belongs to the scytalone dehydratase family. Homotrimer. Each subunit contains an active site, located in the central part of the hydrophobic core of the monomer, which functions independently.

The protein operates within secondary metabolite biosynthesis. In terms of biological role, dehydratase; part of the gene cluster that mediates the biosynthesis of dibenzodioxocinones such as pestalotiollide B, a novel class of inhibitors against cholesterol ester transfer protein (CEPT). The biosynthesis initiates from condensation of acetate and malonate units catalyzed by the non-reducing PKS pks8/GME11356. Pks8/GME11356 lacks a thioesterase (TE) domain, which is important to the cyclizing of the third ring of atrochrysone carboxylic acid, and the esterase GME11355 might play the role of TE and catalyzes the cyclization reaction of the C ring. The lactamase-like protein GME11357 (or other beta-lactamases in Pestalotiopsis microspora) probably hydrolyzes the thioester bond between the ACP of pks8/GME11356 and the intermediate to release atrochrysone carboxylic acid, which is spontaneously dehydrates to form endocrocin anthrone. Endocrocin anthrone is further converted to emodin via the endocrocin intermediate. Emodin is then oxidized by several enzymes such as the Baeyer-Villiger oxidase GME11358, the oxidoreductase GME11367, the short chain dehydrogenase/reductase GME11373, as well as by other oxidoreductases from the cluster, to modify the A and C rings and open the B ring, and finally yield monodictyphenone. The prenyltransferase GME11375 may catalyze the addition reaction between the C5 side chains and the carbon bone of dibenzodioxocinones. The remaining biochemical reactions to the final product dibenzodioxocinones should be methylation catalyzed by methyltransferase GME11366 and reduction and lactonization reaction catalyzed by a series of oxidordeuctases. The polypeptide is Dehydratase GME11372 (Pestalotiopsis microspora).